A 111-amino-acid polypeptide reads, in one-letter code: UPF0060 membrane protein Krad_3114 (111 aa).

4 consecutive transmembrane segments (helical) span residues 7-27 (IALF…VWQG), 33-53 (GLAW…AATL), 62-82 (VLAA…AVVD), and 88-108 (RFDV…MYAP).

It belongs to the UPF0060 family.

The protein localises to the cell membrane. The sequence is that of UPF0060 membrane protein Krad_3114 from Kineococcus radiotolerans (strain ATCC BAA-149 / DSM 14245 / SRS30216).